The chain runs to 152 residues: Bacchus (152 aa).

The span at 29–41 shows a compositional bias: basic and acidic residues; sequence DLKAKAAAEDKAA. The interval 29 to 152 is disordered; that stretch reads DLKAKAAAED…DDGSGSDDQA (124 aa). Positions 42–51 are enriched in low complexity; that stretch reads AADAAGDAAD. Residues 72 to 89 are compositionally biased toward basic and acidic residues; sequence ESVKGTKRPAEAKSAESK. Over residues 99–152 the composition is skewed to acidic residues; that stretch reads GDSDEEEALEEIIEGDSEIESDEYDIPYDGEEDDIECDDDDDDNDDGSGSDDQA.

In terms of tissue distribution, expressed in the brain.

It localises to the nucleus. Negatively regulates tyramine beta-hydroxylase tbh and thus the conversion of tyramine (TA) to octopamine (OA). In tyrosine decarboxylase 2 (Tdc2) neurons, acts in an amine-mediated signaling pathway to negatively regulate acute ethanol sensitivity probably via tbh-mediated depletion of TA. This Drosophila melanogaster (Fruit fly) protein is Bacchus.